We begin with the raw amino-acid sequence, 684 residues long: RNA helicase NPH-II (684 aa).

The Helicase ATP-binding domain occupies 184 to 359; that stretch reads FRAWAARRPT…EFFPDAEFVH (176 aa). 197-204 provides a ligand contact to ATP; the sequence is GGTGVGKT. The DEXH box motif lies at 308-311; that stretch reads DEVH. Positions 392-563 constitute a Helicase C-terminal domain; sequence NVSAALSAHR…DLYVQPSDLE (172 aa).

It belongs to the DEAD box helicase family. DEAH subfamily. Monomer.

The protein localises to the virion. The enzyme catalyses ATP + H2O = ADP + phosphate + H(+). NTP-dependent helicase that catalyzes unidirectional unwinding of 3'tailed duplex RNAs and plays an important role during transcription of early mRNAs, presumably by preventing R-loop formation behind the elongating RNA polymerase. Might also play a role in the export of newly synthesized mRNA chains out of the core into the cytoplasm. Required for replication and propagation of viral particles. The sequence is that of RNA helicase NPH-II (NPH2) from Homo sapiens (Human).